The primary structure comprises 571 residues: Probable serine/threonine-protein kinase WNK4 (571 aa).

The region spanning 19-277 (GRFAEILGRG…AKELLQDPFL (259 aa)) is the Protein kinase domain. ATP is bound by residues 99–102 (TELF) and Lys149. Asp166 (proton acceptor) is an active-site residue. Positions 396 to 425 (EDDETPHDHHRHRTDSFHSSSSHASSSQAS) are disordered. Positions 412–425 (FHSSSSHASSSQAS) are enriched in low complexity. At Ser522 the chain carries Phosphoserine.

Belongs to the protein kinase superfamily. Ser/Thr protein kinase family. WNK subfamily.

The enzyme catalyses L-seryl-[protein] + ATP = O-phospho-L-seryl-[protein] + ADP + H(+). It carries out the reaction L-threonyl-[protein] + ATP = O-phospho-L-threonyl-[protein] + ADP + H(+). Functionally, may regulate flowering time by modulating the photoperiod pathway. The polypeptide is Probable serine/threonine-protein kinase WNK4 (WNK4) (Arabidopsis thaliana (Mouse-ear cress)).